Consider the following 704-residue polypeptide: Neutral ceramidase (704 aa).

The signal sequence occupies residues 1–23 (MANSKMAFLAFLAVSFLCGLVSA). N230 carries an N-linked (GlcNAc...) asparagine glycan. The active-site Nucleophile is the S276. N-linked (GlcNAc...) asparagine glycosylation is found at N362, N550, and N598.

This sequence belongs to the neutral ceramidase family. N-glycosylated. Widely expressed in different tissues but enriched in neurons at all stages of development.

Its subcellular location is the secreted. It catalyses the reaction an N-acylsphing-4-enine + H2O = sphing-4-enine + a fatty acid. Functionally, hydrolyzes the sphingolipid ceramide into sphingosine and free fatty acid at an optimal pH of 6.5-7.5. Acts as a key regulator of sphingolipid signaling metabolites by generating sphingosine at the cell surface. Regulates synaptic vesicle exocytosis and trafficking by controlling presynaptic terminal sphingolipid composition. The polypeptide is Neutral ceramidase (CDase) (Drosophila melanogaster (Fruit fly)).